The chain runs to 107 residues: Histone H4 (107 aa).

Residues 1–16 show a composition bias toward gly residues; it reads MPGRGKGGKGGKGYGK. The tract at residues 1–23 is disordered; sequence MPGRGKGGKGGKGYGKVGAKRHA. Residues 17 to 21 mediate DNA binding; sequence VGAKR.

The protein belongs to the histone H4 family. As to quaternary structure, the nucleosome is a histone octamer containing two molecules each of H2A, H2B, H3 and H4 assembled in one H3-H4 heterotetramer and two H2A-H2B heterodimers. The octamer wraps approximately 147 bp of DNA.

Its subcellular location is the nucleus. The protein resides in the chromosome. In terms of biological role, core component of nucleosome. Nucleosomes wrap and compact DNA into chromatin, limiting DNA accessibility to the cellular machineries which require DNA as a template. Histones thereby play a central role in transcription regulation, DNA repair, DNA replication and chromosomal stability. DNA accessibility is regulated via a complex set of post-translational modifications of histones, also called histone code, and nucleosome remodeling. The protein is Histone H4 of Euplotes crassus.